The primary structure comprises 507 residues: Efflux pump ustT (507 aa).

A run of 11 helical transmembrane segments spans residues 59 to 79 (IAVV…IIVA), 146 to 166 (LLIA…VTWF), 180 to 200 (IWQL…AMIA), 216 to 236 (HAAV…LANF), 240 to 260 (IPVF…YVVV), 316 to 336 (VLLI…SGIT), 359 to 379 (AGVN…ILVK), 398 to 418 (VCLI…TLVF), 421 to 441 (TVFA…TGMV), 449 to 469 (VFTG…PMLA), and 481 to 501 (IWVG…LGAI).

This sequence belongs to the major facilitator superfamily.

The protein localises to the cell membrane. It functions in the pathway mycotoxin biosynthesis. Functionally, efflux pump; part of the gene cluster that mediates the biosynthesis of the secondary metabolite ustiloxin B, an antimitotic tetrapeptide. Probably involved in self-resistance through the export of ustiloxin B. In Aspergillus flavus (strain ATCC 200026 / FGSC A1120 / IAM 13836 / NRRL 3357 / JCM 12722 / SRRC 167), this protein is Efflux pump ustT.